A 62-amino-acid polypeptide reads, in one-letter code: Photosystem II reaction center protein Z (62 aa).

A run of 2 helical transmembrane segments spans residues Ala8–Ser28 and Phe41–Ile61.

Belongs to the PsbZ family. As to quaternary structure, PSII is composed of 1 copy each of membrane proteins PsbA, PsbB, PsbC, PsbD, PsbE, PsbF, PsbH, PsbI, PsbJ, PsbK, PsbL, PsbM, PsbT, PsbY, PsbZ, Psb30/Ycf12, at least 3 peripheral proteins of the oxygen-evolving complex and a large number of cofactors. It forms dimeric complexes.

It is found in the plastid. It localises to the chloroplast thylakoid membrane. Its function is as follows. May control the interaction of photosystem II (PSII) cores with the light-harvesting antenna, regulates electron flow through the 2 photosystem reaction centers. PSII is a light-driven water plastoquinone oxidoreductase, using light energy to abstract electrons from H(2)O, generating a proton gradient subsequently used for ATP formation. The protein is Photosystem II reaction center protein Z of Populus alba (White poplar).